Here is a 349-residue protein sequence, read N- to C-terminus: UPF0324 inner membrane protein YeiH (349 aa).

Residues 1 to 12 (MTNITLQKQHRT) lie on the Periplasmic side of the membrane. Residues 13 to 32 (LWHFIPGLALSAVITGVALW) traverse the membrane as a helical segment. Residues 33 to 35 (GGS) lie on the Cytoplasmic side of the membrane. A helical membrane pass occupies residues 36–58 (IPAVAGAGFSALTLAILLGMVLG). The Periplasmic segment spans residues 59 to 99 (NTIYPHIWKSCDGGVLFAKQYLLRLGIILYGFRLTFSQIAD). Residues 100–122 (VGISGIIIDVLTLSSTFLLACFL) form a helical membrane-spanning segment. The Cytoplasmic portion of the chain corresponds to 123 to 131 (GQKVFGLDK). Residues 132–151 (HTSWLIGAGSSICGAAAVLA) form a helical membrane-spanning segment. At 152-162 (TEPVVKAEASK) the chain is on the periplasmic side. The chain crosses the membrane as a helical span at residues 163–185 (VTVAVATVVIFGTVAIFLYPAIY). The Cytoplasmic segment spans residues 186-261 (PLMSQWFSPE…SGANSGEKSK (76 aa)). The helical transmembrane segment at 262 to 283 (ITIPWFAILFIVVAIFNSFHLL) threads the bilayer. The Periplasmic portion of the chain corresponds to 284–289 (PQSVVN). Residues 290–312 (MLVTLDTFLLAMAMAALGLTTHV) traverse the membrane as a helical segment. Residues 313–321 (SALKKAGAK) lie on the Cytoplasmic side of the membrane. Residues 322–344 (PLLMALVLFAWLIVGGGAINYVI) form a helical membrane-spanning segment. Over 345–349 (QSVIA) the chain is Periplasmic.

This sequence belongs to the UPF0324 family.

The protein resides in the cell inner membrane. This chain is UPF0324 inner membrane protein YeiH (yeiH), found in Escherichia coli O157:H7.